The following is a 267-amino-acid chain: Acyl-[acyl-carrier-protein]--UDP-N-acetylglucosamine O-acyltransferase (267 aa).

It belongs to the transferase hexapeptide repeat family. LpxA subfamily. Homotrimer.

The protein resides in the cytoplasm. The catalysed reaction is a (3R)-hydroxyacyl-[ACP] + UDP-N-acetyl-alpha-D-glucosamine = a UDP-3-O-[(3R)-3-hydroxyacyl]-N-acetyl-alpha-D-glucosamine + holo-[ACP]. It functions in the pathway glycolipid biosynthesis; lipid IV(A) biosynthesis; lipid IV(A) from (3R)-3-hydroxytetradecanoyl-[acyl-carrier-protein] and UDP-N-acetyl-alpha-D-glucosamine: step 1/6. Its function is as follows. Involved in the biosynthesis of lipid A, a phosphorylated glycolipid that anchors the lipopolysaccharide to the outer membrane of the cell. In Cupriavidus taiwanensis (strain DSM 17343 / BCRC 17206 / CCUG 44338 / CIP 107171 / LMG 19424 / R1) (Ralstonia taiwanensis (strain LMG 19424)), this protein is Acyl-[acyl-carrier-protein]--UDP-N-acetylglucosamine O-acyltransferase.